Consider the following 354-residue polypeptide: Fructose-bisphosphate aldolase (354 aa).

Residue Ser-50 coordinates D-glyceraldehyde 3-phosphate. Catalysis depends on Asp-83, which acts as the Proton donor. His-84, Asp-105, Glu-142, and His-198 together coordinate Zn(2+). Gly-199 serves as a coordination point for dihydroxyacetone phosphate. His-232 contributes to the Zn(2+) binding site. Dihydroxyacetone phosphate is bound by residues 233-235 (GSS) and 275-278 (NIDT).

It belongs to the class II fructose-bisphosphate aldolase family. Requires Zn(2+) as cofactor.

The enzyme catalyses beta-D-fructose 1,6-bisphosphate = D-glyceraldehyde 3-phosphate + dihydroxyacetone phosphate. Its pathway is carbohydrate degradation; glycolysis; D-glyceraldehyde 3-phosphate and glycerone phosphate from D-glucose: step 4/4. Functionally, catalyzes the aldol condensation of dihydroxyacetone phosphate (DHAP or glycerone-phosphate) with glyceraldehyde 3-phosphate (G3P) to form fructose 1,6-bisphosphate (FBP) in gluconeogenesis and the reverse reaction in glycolysis. The protein is Fructose-bisphosphate aldolase (fba) of Stutzerimonas stutzeri (Pseudomonas stutzeri).